Reading from the N-terminus, the 525-residue chain is WD repeat-containing protein JIP5 (525 aa).

5 WD repeats span residues 28–69, 121–160, 211–251, 270–310, and 358–398; these read VFDE…RILN, RHKG…VMKK, HNGD…ESDA, QEDE…LVDQ, and RKHS…DDEE. A disordered region spans residues 396 to 525; sequence DEEGKINESY…EHGIRKFEGL (130 aa). Residues 410–424 show a composition bias toward acidic residues; the sequence is SDNDNGFDSDADSNS. Residues 425-435 show a composition bias toward low complexity; that stretch reads DSESVSSSDVD. Residues 463 to 484 show a composition bias toward basic and acidic residues; sequence SKDELLAELEKDLQSSDEDSKH. Over residues 485–501 the composition is skewed to basic residues; that stretch reads YTKRTKSTQPKKLKKQK. Positions 513 to 525 are enriched in basic and acidic residues; sequence QKHEHGIRKFEGL.

Belongs to the WD repeat WDR55 family.

The protein localises to the nucleus. It localises to the nucleolus. This chain is WD repeat-containing protein JIP5 (JIP5), found in Kluyveromyces lactis (strain ATCC 8585 / CBS 2359 / DSM 70799 / NBRC 1267 / NRRL Y-1140 / WM37) (Yeast).